We begin with the raw amino-acid sequence, 118 residues long: Large ribosomal subunit protein uL23c (118 aa).

The protein belongs to the universal ribosomal protein uL23 family. As to quaternary structure, part of the 50S ribosomal subunit.

It is found in the plastid. It localises to the chloroplast. Binds to 23S rRNA. This Stigeoclonium helveticum (Green alga) protein is Large ribosomal subunit protein uL23c (rpl23).